Reading from the N-terminus, the 309-residue chain is Probable manganese-dependent inorganic pyrophosphatase (309 aa).

Residues His-9, Asp-13, Asp-15, Asp-75, His-97, and Asp-149 each contribute to the Mn(2+) site.

The protein belongs to the PPase class C family. It depends on Mn(2+) as a cofactor.

It localises to the cytoplasm. It carries out the reaction diphosphate + H2O = 2 phosphate + H(+). The chain is Probable manganese-dependent inorganic pyrophosphatase from Lactiplantibacillus plantarum (strain ATCC BAA-793 / NCIMB 8826 / WCFS1) (Lactobacillus plantarum).